The sequence spans 345 residues: Uroporphyrinogen decarboxylase (345 aa).

Substrate-binding positions include 26–30, Asp-76, Tyr-151, Ser-205, and His-321; that span reads RQAGR.

It belongs to the uroporphyrinogen decarboxylase family. As to quaternary structure, homodimer.

The protein resides in the cytoplasm. It catalyses the reaction uroporphyrinogen III + 4 H(+) = coproporphyrinogen III + 4 CO2. The protein operates within porphyrin-containing compound metabolism; protoporphyrin-IX biosynthesis; coproporphyrinogen-III from 5-aminolevulinate: step 4/4. Its function is as follows. Catalyzes the decarboxylation of four acetate groups of uroporphyrinogen-III to yield coproporphyrinogen-III. The sequence is that of Uroporphyrinogen decarboxylase from Phenylobacterium zucineum (strain HLK1).